Consider the following 291-residue polypeptide: ATP synthase gamma chain 2 (291 aa).

The interval 187 to 208 (LLPHPDKDESQDSKPNDATSRW) is disordered. Over residues 190–201 (HPDKDESQDSKP) the composition is skewed to basic and acidic residues.

Belongs to the ATPase gamma chain family. F-type ATPases have 2 components, CF(1) - the catalytic core - and CF(0) - the membrane proton channel. CF(1) has five subunits: alpha(3), beta(3), gamma(1), delta(1), epsilon(1). CF(0) has three main subunits: a, b and c.

Its subcellular location is the cell inner membrane. Produces ATP from ADP in the presence of a proton gradient across the membrane. The gamma chain is believed to be important in regulating ATPase activity and the flow of protons through the CF(0) complex. The protein is ATP synthase gamma chain 2 of Photobacterium profundum (strain SS9).